The chain runs to 80 residues: Cytochrome c oxidase subunit 7A1, mitochondrial (80 aa).

The N-terminal 21 residues, 1–21 (MRALRVSQALVRSFSSTARNR), are a transit peptide targeting the mitochondrion. Residues 22-46 (FENRVAEKQKLFQEDNGLPVHLKGG) lie on the Mitochondrial matrix side of the membrane. The chain crosses the membrane as a helical span at residues 47–75 (ATDNILYRVTMTLCLGGTLYSLYCLGWAS). Topologically, residues 76–80 (FPHKK) are mitochondrial intermembrane.

This sequence belongs to the cytochrome c oxidase VIIa family. Component of the complex IV (CIV, cytochrome c oxidase), a multisubunit enzyme composed of 14 subunits. The complex is composed of a catalytic core of 3 subunits MT-CO1, MT-CO2 and MT-CO3, encoded in the mitochondrial DNA, and 11 supernumerary subunits COX4I1 (or COX4I2), COX5A, COX5B, COX6A2 (or COX6A1), COX6B1 (or COX6B2), COX6C, COX7A1 (or COX7A2), COX7B, COX7C, COX8B and NDUFA4, which are encoded in the nuclear genome. The complex exists as a monomer or a dimer and forms supercomplexes (SCs) in the inner mitochondrial membrane with NADH-ubiquinone oxidoreductase (complex I, CI) and ubiquinol-cytochrome c oxidoreductase (cytochrome b-c1 complex, complex III, CIII), resulting in different assemblies (supercomplex SCI(1)III(2)IV(1) and megacomplex MCI(2)III(2)IV(2)).

Its subcellular location is the mitochondrion inner membrane. The protein operates within energy metabolism; oxidative phosphorylation. In terms of biological role, component of the mitochondrial respiratory complex IV (CIV, also named cytochrome c oxidase complex), the last enzyme in the mitochondrial electron transport chain which drives oxidative phosphorylation. The CIV complex is the component of the respiratory chain that catalyzes the reduction of oxygen to water. Acts as an assembly factor that specifically drives the homodimerization of CIV complexes, mediating the formation of mitochondrial respiratory supercomplexes (respirasomes) containing two CIV: supercomplxes with two molecules of CIV show improved activity. Despite being highly expressed in brown adipose tissue, not required for thermogenesis. The chain is Cytochrome c oxidase subunit 7A1, mitochondrial (COX7A1) from Bos taurus (Bovine).